The primary structure comprises 394 residues: Myb-like protein R (394 aa).

2 helical membrane passes run 11–31 (IGAQ…EFII) and 99–119 (FFIG…LIIF). In terms of domain architecture, Myb-like spans 325-377 (GNWSLDEQKALMVEVSTLGNKSEINWFFISKQLFLKGISRNARECQRKHESIQ).

It localises to the membrane. The polypeptide is Myb-like protein R (mybR) (Dictyostelium discoideum (Social amoeba)).